The following is a 144-amino-acid chain: Alpha-crystallin (144 aa).

One can recognise a sHSP domain in the interval proline 33–threonine 143.

It belongs to the small heat shock protein (HSP20) family.

The protein localises to the secreted. It is found in the cell wall. The protein resides in the cytoplasm. Functionally, acts as a chaperone. The chain is Alpha-crystallin (hspX) from Mycobacterium bovis (strain ATCC BAA-935 / AF2122/97).